A 421-amino-acid polypeptide reads, in one-letter code: Zinc metalloproteinase-disintegrin-like lachestatin-1 (421 aa).

A Peptidase M12B domain is found at 10-206 (KYVKLVLVAD…DMPQCILEKP (197 aa)). Cystine bridges form between C121-C201, C161-C185, and C163-C168. A Zn(2+)-binding site is contributed by H146. E147 is a catalytic residue. Residues H150 and H156 each contribute to the Zn(2+) site. The region spanning 214–299 (PPVCGNYFVE…AECTDRFQRN (86 aa)) is the Disintegrin domain. Positions 216, 219, 221, 223, 226, and 229 each coordinate Ca(2+). 14 disulfide bridges follow: C217–C246, C228–C241, C230–C236, C240–C263, C254–C260, C259–C285, C272–C292, C279–C310, C303–C315, C322–C372, C337–C383, C350–C360, C367–C409, and C403–C414. The D/ECD-tripeptide motif lies at 278–280 (ECD). Residues D280, M281, D283, D294, and R295 each contribute to the Ca(2+) site. N312 carries an N-linked (GlcNAc...) asparagine glycan.

The protein belongs to the venom metalloproteinase (M12B) family. P-III subfamily. P-IIIc sub-subfamily. Homodimer; disulfide-linked. Requires Zn(2+) as cofactor. As to expression, expressed by the venom gland.

It is found in the secreted. Its function is as follows. Snake venom zinc metalloprotease that induces apoptosis in vascular endothelial cells (VEC), without degrading the extracellular matrix (it cannot cleave collagen) or inhibiting adhesion of VEC. Has also fibrinogenolytic and hemorrhagic activities. The protein is Zinc metalloproteinase-disintegrin-like lachestatin-1 of Lachesis muta rhombeata (Bushmaster).